The sequence spans 113 residues: Protein AaeX (113 aa).

Transmembrane regions (helical) follow at residues 3 to 23 (LLPV…EMIL) and 43 to 63 (FVWH…YLIS).

The protein belongs to the AaeX family.

It localises to the cell membrane. The protein is Protein AaeX of Sodalis glossinidius (strain morsitans).